Consider the following 23-residue polypeptide: Phospholipase A2 homolog 4 (23 aa).

It belongs to the phospholipase A2 family. Group II subfamily. K49 sub-subfamily. As to quaternary structure, homodimer; non-covalently linked (probable alternative/compact dimer conformation in solution). As to expression, expressed by the venom gland.

The protein localises to the secreted. Functionally, snake venom phospholipase A2 homolog that lacks enzymatic activity. Induces acute muscle damage after intramuscular injection in mice and disrupts negatively charged liposomes but not positively charged ones. Also exerts a weak anticoagulant effect only at concentrations of 40 ug/ml or higher. A model of myotoxic mechanism has been proposed: an apo Lys49-PLA2 is activated by the entrance of a hydrophobic molecule (e.g. fatty acid) at the hydrophobic channel of the protein leading to a reorientation of a monomer. This reorientation causes a transition between 'inactive' to 'active' states, causing alignment of C-terminal and membrane-docking sites (MDoS) side-by-side and putting the membrane-disruption sites (MDiS) in the same plane, exposed to solvent and in a symmetric position for both monomers. The MDoS region stabilizes the toxin on membrane by the interaction of charged residues with phospholipid head groups. Subsequently, the MDiS region destabilizes the membrane with penetration of hydrophobic residues. This insertion causes a disorganization of the membrane, allowing an uncontrolled influx of ions (i.e. calcium and sodium), and eventually triggering irreversible intracellular alterations and cell death. In Bothrops asper (Terciopelo), this protein is Phospholipase A2 homolog 4.